A 194-amino-acid polypeptide reads, in one-letter code: Orotate phosphoribosyltransferase (194 aa).

5-phospho-alpha-D-ribose 1-diphosphate contacts are provided by residues R102, K103, K106, H108, and 129 to 137 (EDVVTTGGS). T133 and R161 together coordinate orotate.

Belongs to the purine/pyrimidine phosphoribosyltransferase family. PyrE subfamily. As to quaternary structure, homodimer. Mg(2+) serves as cofactor.

It carries out the reaction orotidine 5'-phosphate + diphosphate = orotate + 5-phospho-alpha-D-ribose 1-diphosphate. Its pathway is pyrimidine metabolism; UMP biosynthesis via de novo pathway; UMP from orotate: step 1/2. Functionally, catalyzes the transfer of a ribosyl phosphate group from 5-phosphoribose 1-diphosphate to orotate, leading to the formation of orotidine monophosphate (OMP). The sequence is that of Orotate phosphoribosyltransferase from Synechococcus sp. (strain CC9902).